The sequence spans 276 residues: Energy-coupling factor transporter ATP-binding protein EcfA1 (276 aa).

The 236-residue stretch at Ile2–Asp237 folds into the ABC transporter domain. ATP is bound at residue Gly37–Ser44.

The protein belongs to the ABC transporter superfamily. Energy-coupling factor EcfA family. In terms of assembly, forms a stable energy-coupling factor (ECF) transporter complex composed of 2 membrane-embedded substrate-binding proteins (S component), 2 ATP-binding proteins (A component) and 2 transmembrane proteins (T component).

The protein resides in the cell membrane. Its function is as follows. ATP-binding (A) component of a common energy-coupling factor (ECF) ABC-transporter complex. Unlike classic ABC transporters this ECF transporter provides the energy necessary to transport a number of different substrates. In Streptococcus thermophilus (strain CNRZ 1066), this protein is Energy-coupling factor transporter ATP-binding protein EcfA1.